The following is a 261-amino-acid chain: Ribosomal RNA small subunit methyltransferase J (261 aa).

S-adenosyl-L-methionine is bound by residues 109 to 110 (RD), 125 to 126 (ER), and Asp179.

It belongs to the methyltransferase superfamily. RsmJ family.

The protein localises to the cytoplasm. The catalysed reaction is guanosine(1516) in 16S rRNA + S-adenosyl-L-methionine = N(2)-methylguanosine(1516) in 16S rRNA + S-adenosyl-L-homocysteine + H(+). Specifically methylates the guanosine in position 1516 of 16S rRNA. This Pseudomonas aeruginosa (strain LESB58) protein is Ribosomal RNA small subunit methyltransferase J.